We begin with the raw amino-acid sequence, 396 residues long: Phosphoglycerate kinase (396 aa).

Substrate is bound by residues 21–23, R37, 60–63, R121, and R154; these read DFN and HLGR. Residues K205, G296, E327, and 353 to 356 each bind ATP; that span reads GGDS.

Belongs to the phosphoglycerate kinase family. Monomer.

Its subcellular location is the cytoplasm. The catalysed reaction is (2R)-3-phosphoglycerate + ATP = (2R)-3-phospho-glyceroyl phosphate + ADP. The protein operates within carbohydrate degradation; glycolysis; pyruvate from D-glyceraldehyde 3-phosphate: step 2/5. The polypeptide is Phosphoglycerate kinase (Anaeromyxobacter sp. (strain Fw109-5)).